The primary structure comprises 342 residues: Dihydroorotase (342 aa).

Residues histidine 13 and histidine 15 each coordinate Zn(2+). Residues 15–17 (HLR) and asparagine 41 each bind substrate. Zn(2+)-binding residues include lysine 98, histidine 135, and histidine 173. At lysine 98 the chain carries N6-carboxylysine. Histidine 135 serves as a coordination point for substrate. Position 218 (leucine 218) interacts with substrate. A Zn(2+)-binding site is contributed by aspartate 246. Aspartate 246 is a catalytic residue. The substrate site is built by histidine 250 and alanine 262.

The protein belongs to the metallo-dependent hydrolases superfamily. DHOase family. Class II DHOase subfamily. Homodimer. Zn(2+) is required as a cofactor.

The catalysed reaction is (S)-dihydroorotate + H2O = N-carbamoyl-L-aspartate + H(+). It participates in pyrimidine metabolism; UMP biosynthesis via de novo pathway; (S)-dihydroorotate from bicarbonate: step 3/3. Functionally, catalyzes the reversible cyclization of carbamoyl aspartate to dihydroorotate. This Vibrio vulnificus (strain YJ016) protein is Dihydroorotase.